Reading from the N-terminus, the 252-residue chain is Hydroxyacylglutathione hydrolase (252 aa).

Zn(2+) contacts are provided by His-54, His-56, Asp-58, His-59, His-113, Asp-132, and His-170.

This sequence belongs to the metallo-beta-lactamase superfamily. Glyoxalase II family. Monomer. The cofactor is Zn(2+).

The enzyme catalyses an S-(2-hydroxyacyl)glutathione + H2O = a 2-hydroxy carboxylate + glutathione + H(+). The protein operates within secondary metabolite metabolism; methylglyoxal degradation; (R)-lactate from methylglyoxal: step 2/2. Functionally, thiolesterase that catalyzes the hydrolysis of S-D-lactoyl-glutathione to form glutathione and D-lactic acid. In Gloeobacter violaceus (strain ATCC 29082 / PCC 7421), this protein is Hydroxyacylglutathione hydrolase.